The following is an 81-amino-acid chain: Sulfur carrier protein TusA (81 aa).

Cys19 functions as the Cysteine persulfide intermediate in the catalytic mechanism.

It belongs to the sulfur carrier protein TusA family. Interacts with IscS.

It localises to the cytoplasm. Its pathway is tRNA modification. Its function is as follows. Sulfur carrier protein involved in sulfur trafficking in the cell. Part of a sulfur-relay system required for 2-thiolation during synthesis of 2-thiouridine of the modified wobble base 5-methylaminomethyl-2-thiouridine (mnm(5)s(2)U) in tRNA. Interacts with IscS and stimulates its cysteine desulfurase activity. Accepts an activated sulfur from IscS, which is then transferred to TusD, and thus determines the direction of sulfur flow from IscS to 2-thiouridine formation. Also appears to be involved in sulfur transfer for the biosynthesis of molybdopterin. This Escherichia fergusonii (strain ATCC 35469 / DSM 13698 / CCUG 18766 / IAM 14443 / JCM 21226 / LMG 7866 / NBRC 102419 / NCTC 12128 / CDC 0568-73) protein is Sulfur carrier protein TusA.